Reading from the N-terminus, the 502-residue chain is Type II methyltransferase M.HincII (502 aa).

This sequence belongs to the N(4)/N(6)-methyltransferase family.

It carries out the reaction a 2'-deoxyadenosine in DNA + S-adenosyl-L-methionine = an N(6)-methyl-2'-deoxyadenosine in DNA + S-adenosyl-L-homocysteine + H(+). Its function is as follows. A gamma subtype methylase that recognizes the double-stranded sequence 5'-GTYRAC-3', methylates A-5 on both strands, and protects the DNA from cleavage by the HincII endonuclease. In Haemophilus influenzae, this protein is Type II methyltransferase M.HincII.